Consider the following 502-residue polypeptide: Glycerol kinase (502 aa).

ADP is bound at residue Thr13. The ATP site is built by Thr13, Thr14, and Ser15. Sn-glycerol 3-phosphate is bound at residue Thr13. Arg17 is an ADP binding site. Arg83, Glu84, Tyr136, and Asp246 together coordinate sn-glycerol 3-phosphate. Residues Arg83, Glu84, Tyr136, Asp246, and Gln247 each contribute to the glycerol site. The ADP site is built by Thr268 and Gly311. Residues Thr268, Gly311, Gln315, and Gly412 each coordinate ATP. 2 residues coordinate ADP: Gly412 and Asn416.

It belongs to the FGGY kinase family.

It carries out the reaction glycerol + ATP = sn-glycerol 3-phosphate + ADP + H(+). It participates in polyol metabolism; glycerol degradation via glycerol kinase pathway; sn-glycerol 3-phosphate from glycerol: step 1/1. Inhibited by fructose 1,6-bisphosphate (FBP). Its function is as follows. Key enzyme in the regulation of glycerol uptake and metabolism. Catalyzes the phosphorylation of glycerol to yield sn-glycerol 3-phosphate. This is Glycerol kinase from Francisella tularensis subsp. tularensis (strain WY96-3418).